Reading from the N-terminus, the 108-residue chain is MPKPGILKSKSMFCVIYRSSKRDQTYLYVEKKDDFSRVPEELMKGFGQPQLAMILPLDGRKKLVNADIEKVKQALTEQGYYLQLPPPPEDLLKQHLSVMGQKTDDINK.

The YcgL domain maps to 12-96 (MFCVIYRSSK…PPEDLLKQHL (85 aa)).

In Escherichia coli O127:H6 (strain E2348/69 / EPEC), this protein is Protein YcgL.